A 428-amino-acid chain; its full sequence is Histidine--tRNA ligase (428 aa).

It belongs to the class-II aminoacyl-tRNA synthetase family. In terms of assembly, homodimer.

Its subcellular location is the cytoplasm. The enzyme catalyses tRNA(His) + L-histidine + ATP = L-histidyl-tRNA(His) + AMP + diphosphate + H(+). This Bordetella avium (strain 197N) protein is Histidine--tRNA ligase.